The sequence spans 479 residues: Trigger factor (479 aa).

Residues 174–261 (GDIAVVSFSG…LKELKTRELP (88 aa)) enclose the PPIase FKBP-type domain. Residues 438–479 (VLESEAKTSKPAAKSKGSKTKSTKTKTNKANTEKPASDKSKS) are disordered. A compositionally biased stretch (basic residues) spans 453–464 (KGSKTKSTKTKT). The span at 468-479 (NTEKPASDKSKS) shows a compositional bias: basic and acidic residues.

The protein belongs to the FKBP-type PPIase family. Tig subfamily.

Its subcellular location is the cytoplasm. It carries out the reaction [protein]-peptidylproline (omega=180) = [protein]-peptidylproline (omega=0). In terms of biological role, involved in protein export. Acts as a chaperone by maintaining the newly synthesized protein in an open conformation. Functions as a peptidyl-prolyl cis-trans isomerase. The sequence is that of Trigger factor from Prochlorococcus marinus (strain MIT 9313).